Here is a 324-residue protein sequence, read N- to C-terminus: Beta-ketoacyl-[acyl-carrier-protein] synthase III (324 aa).

Residues Cys-112 and His-249 contribute to the active site. Residues 250-254 (QANRR) are ACP-binding. Residue Asn-279 is part of the active site.

The protein belongs to the thiolase-like superfamily. FabH family. Homodimer.

The protein resides in the cytoplasm. The enzyme catalyses malonyl-[ACP] + acetyl-CoA + H(+) = 3-oxobutanoyl-[ACP] + CO2 + CoA. It participates in lipid metabolism; fatty acid biosynthesis. Functionally, catalyzes the condensation reaction of fatty acid synthesis by the addition to an acyl acceptor of two carbons from malonyl-ACP. Catalyzes the first condensation reaction which initiates fatty acid synthesis and may therefore play a role in governing the total rate of fatty acid production. Possesses both acetoacetyl-ACP synthase and acetyl transacylase activities. Its substrate specificity determines the biosynthesis of branched-chain and/or straight-chain of fatty acids. The chain is Beta-ketoacyl-[acyl-carrier-protein] synthase III from Streptococcus equi subsp. zooepidemicus (strain H70).